Consider the following 572-residue polypeptide: Ribonuclease Y (572 aa).

A helical transmembrane segment spans residues 1-21 (MPTLYVILSLLLGLIGGVLVQ). 2 disordered regions span residues 59 to 85 (HEAA…DAAE) and 110 to 142 (QLEA…ERED). Basic and acidic residues-rich tracts occupy residues 110–119 (QLEAEREQAK) and 129–142 (LSTD…ERED). The region spanning 262–322 (SVSVVPIPSD…LRREVARHVL (61 aa)) is the KH domain. One can recognise an HD domain in the interval 388–481 (VLKHSVQVAH…VAAADAISAA (94 aa)).

Belongs to the RNase Y family.

It localises to the cell membrane. In terms of biological role, endoribonuclease that initiates mRNA decay. In Deinococcus radiodurans (strain ATCC 13939 / DSM 20539 / JCM 16871 / CCUG 27074 / LMG 4051 / NBRC 15346 / NCIMB 9279 / VKM B-1422 / R1), this protein is Ribonuclease Y.